A 135-amino-acid polypeptide reads, in one-letter code: NADH-quinone oxidoreductase subunit K (135 aa).

The next 3 helical transmembrane spans lie at 33–53, 63–83, and 95–115; these read VLGL…FAIG, FLFM…AFVV, and IMFI…LAIL.

It belongs to the complex I subunit 4L family. As to quaternary structure, NDH-1 is composed of 14 different subunits. Subunits NuoA, H, J, K, L, M, N constitute the membrane sector of the complex.

The protein localises to the cell inner membrane. It catalyses the reaction a quinone + NADH + 5 H(+)(in) = a quinol + NAD(+) + 4 H(+)(out). Its function is as follows. NDH-1 shuttles electrons from NADH, via FMN and iron-sulfur (Fe-S) centers, to quinones in the respiratory chain. The immediate electron acceptor for the enzyme in this species is believed to be ubiquinone. Couples the redox reaction to proton translocation (for every two electrons transferred, four hydrogen ions are translocated across the cytoplasmic membrane), and thus conserves the redox energy in a proton gradient. The protein is NADH-quinone oxidoreductase subunit K of Psychrobacter cryohalolentis (strain ATCC BAA-1226 / DSM 17306 / VKM B-2378 / K5).